A 639-amino-acid polypeptide reads, in one-letter code: Signal recognition particle receptor subunit alpha (639 aa).

The segment at 132–317 (APTTMKKFED…STKPSATKGT (186 aa)) is disordered. 2 stretches are compositionally biased toward basic and acidic residues: residues 137–146 (KKFEDSEKAK) and 153–165 (IETRGEKPKEKAK). A Phosphoserine modification is found at Ser-178. The span at 204–240 (ELSKEEQIRRKREEFIQKHGRGMEKSSKSSKSDAPKE) shows a compositional bias: basic and acidic residues. Thr-285 is subject to Phosphothreonine. Residues Ser-297, Ser-298, and Ser-299 each carry the phosphoserine modification. The span at 305–315 (AQNSTKPSATK) shows a compositional bias: polar residues. The interval 420 to 637 (YVVTFCGVNG…NAKAVVAALM (218 aa)) is NG domain. Position 426–433 (426–433 (GVNGVGKS)) interacts with GTP. The residue at position 474 (Ser-474) is a Phosphoserine. 521-525 (DTAGR) lines the GTP pocket. Position 579 is a phosphothreonine (Thr-579). 589 to 592 (TKFD) provides a ligand contact to GTP.

Belongs to the GTP-binding SRP family. As to quaternary structure, heterodimer with SRPRB. Interacts with the signal recognition particle (SRP) complex subunit SRP54.

The protein localises to the endoplasmic reticulum membrane. Its function is as follows. Component of the SRP (signal recognition particle) receptor. Ensures, in conjunction with the signal recognition particle, the correct targeting of the nascent secretory proteins to the endoplasmic reticulum membrane system. Forms a guanosine 5'-triphosphate (GTP)-dependent complex with the SRP subunit SRP54. SRP receptor compaction and GTPase rearrangement drive SRP-mediated cotranslational protein translocation into the ER. The protein is Signal recognition particle receptor subunit alpha of Bos taurus (Bovine).